Here is a 351-residue protein sequence, read N- to C-terminus: D-alanine--D-alanine ligase (351 aa).

The 195-residue stretch at 146 to 340 (KEIMLYNNIK…YEDLCESIVL (195 aa)) folds into the ATP-grasp domain. 173–226 (AFDYPMVVKPNSGGSSIGTRIVHDEAELAESLKDAYRFDDEIIVEEFITGREFS) lines the ATP pocket. Mg(2+) is bound by residues D295, E307, and N309.

This sequence belongs to the D-alanine--D-alanine ligase family. Mg(2+) is required as a cofactor. Requires Mn(2+) as cofactor.

The protein localises to the cytoplasm. The catalysed reaction is 2 D-alanine + ATP = D-alanyl-D-alanine + ADP + phosphate + H(+). It functions in the pathway cell wall biogenesis; peptidoglycan biosynthesis. In terms of biological role, cell wall formation. The chain is D-alanine--D-alanine ligase from Pediococcus pentosaceus (strain ATCC 25745 / CCUG 21536 / LMG 10740 / 183-1w).